The following is a 416-amino-acid chain: 1-deoxy-D-xylulose 5-phosphate reductoisomerase (416 aa).

Residues threonine 10, glycine 11, serine 12, isoleucine 13, glycine 36, arginine 37, asparagine 38, and asparagine 130 each coordinate NADPH. Residue lysine 131 participates in 1-deoxy-D-xylulose 5-phosphate binding. Residue glutamate 132 participates in NADPH binding. Aspartate 156 contacts Mn(2+). 1-deoxy-D-xylulose 5-phosphate contacts are provided by serine 157, glutamate 158, serine 194, and histidine 217. Glutamate 158 serves as a coordination point for Mn(2+). Glycine 223 serves as a coordination point for NADPH. The 1-deoxy-D-xylulose 5-phosphate site is built by serine 230, asparagine 235, lysine 236, and glutamate 239. Mn(2+) is bound at residue glutamate 239.

Belongs to the DXR family. The cofactor is Mg(2+). Requires Mn(2+) as cofactor.

The enzyme catalyses 2-C-methyl-D-erythritol 4-phosphate + NADP(+) = 1-deoxy-D-xylulose 5-phosphate + NADPH + H(+). It functions in the pathway isoprenoid biosynthesis; isopentenyl diphosphate biosynthesis via DXP pathway; isopentenyl diphosphate from 1-deoxy-D-xylulose 5-phosphate: step 1/6. In terms of biological role, catalyzes the NADPH-dependent rearrangement and reduction of 1-deoxy-D-xylulose-5-phosphate (DXP) to 2-C-methyl-D-erythritol 4-phosphate (MEP). In Synechococcus sp. (strain CC9311), this protein is 1-deoxy-D-xylulose 5-phosphate reductoisomerase.